Here is a 561-residue protein sequence, read N- to C-terminus: uncharacterized protein (561 aa).

Positions 187–217 (DDEELSEEEILNRIDKLQIELEQVIGKQKNI) form a coiled coil.

This is an uncharacterized protein from Dictyostelium discoideum (Social amoeba).